A 179-amino-acid polypeptide reads, in one-letter code: uncharacterized protein (179 aa).

The chain crosses the membrane as a helical span at residues 5–25; that stretch reads MLAGIGIGVAAALGVAAVASL.

To Rickettsia 17 kDa surface antigen.

It localises to the membrane. This is an uncharacterized protein from Escherichia coli O6:H1 (strain CFT073 / ATCC 700928 / UPEC).